Here is a 526-residue protein sequence, read N- to C-terminus: Protein MGF 505-2R (526 aa).

Belongs to the asfivirus MGF 505 family.

In terms of biological role, plays a role in virus cell tropism, and may be required for efficient virus replication in macrophages. The sequence is that of Protein MGF 505-2R from African swine fever virus (isolate Pig/Kenya/KEN-50/1950) (ASFV).